The following is a 167-amino-acid chain: Translationally-controlled tumor protein homolog (167 aa).

In terms of domain architecture, TCTP spans 1–167 (MIIYKDIFSG…WKHGIDEEKI (167 aa)).

Belongs to the TCTP family.

The protein resides in the cytoplasm. It is found in the cytoskeleton. Functionally, involved in protein synthesis. Involved in microtubule stabilization. This chain is Translationally-controlled tumor protein homolog, found in Candida glabrata (strain ATCC 2001 / BCRC 20586 / JCM 3761 / NBRC 0622 / NRRL Y-65 / CBS 138) (Yeast).